Reading from the N-terminus, the 483-residue chain is ATP synthase subunit beta (483 aa).

ATP is bound at residue 162–169 (GGAGVGKT).

This sequence belongs to the ATPase alpha/beta chains family. As to quaternary structure, F-type ATPases have 2 components, CF(1) - the catalytic core - and CF(0) - the membrane proton channel. CF(1) has five subunits: alpha(3), beta(3), gamma(1), delta(1), epsilon(1). CF(0) has four main subunits: a(1), b(1), b'(1) and c(9-12).

It is found in the cellular thylakoid membrane. It catalyses the reaction ATP + H2O + 4 H(+)(in) = ADP + phosphate + 5 H(+)(out). Its function is as follows. Produces ATP from ADP in the presence of a proton gradient across the membrane. The catalytic sites are hosted primarily by the beta subunits. The protein is ATP synthase subunit beta of Rippkaea orientalis (strain PCC 8801 / RF-1) (Cyanothece sp. (strain PCC 8801)).